The sequence spans 230 residues: Flagellar L-ring protein (230 aa).

The N-terminal stretch at 1 to 15 (MSRLPSLSRPCLAIA) is a signal peptide. A lipid anchor (N-palmitoyl cysteine) is attached at cysteine 16. Cysteine 16 carries S-diacylglycerol cysteine lipidation.

Belongs to the FlgH family. The basal body constitutes a major portion of the flagellar organelle and consists of four rings (L,P,S, and M) mounted on a central rod.

The protein resides in the cell outer membrane. The protein localises to the bacterial flagellum basal body. Assembles around the rod to form the L-ring and probably protects the motor/basal body from shearing forces during rotation. This is Flagellar L-ring protein from Xanthomonas axonopodis pv. citri (strain 306).